The chain runs to 216 residues: MAEVEAPATAVEAPAAAVATTTPEVAAPEAGAATEAKGPHKLHRQWTFWYDIQTKTKSGAAWGTSLKKAYTFDTVEEFWSMYDQIFRPSKLSGNADFHLFKAGVEPKWEDPECANGGKWTVPCNRKATFETMWLETLMALIGEQFDETEDICGIVASVRARGDKLALWTRTASNEAVQVNIGKKWKDVIDYNDKITYTFHDDSKRDKPSRGGRYTV.

The tract at residues 1–23 (MAEVEAPATAVEAPAAAVATTTP) is disordered. Cys113 and Cys152 are oxidised to a cystine.

The protein belongs to the eukaryotic initiation factor 4E family. EIF4F is a multi-subunit complex, the composition of which varies with external and internal environmental conditions. It is composed of at least EIF4A, EIF4E and EIF4G. EIF4E is also known to interact with other partners. In higher plants two isoforms of EIF4F have been identified, named isoform EIF4F and isoform EIF(iso)4F. Isoform EIF4F has subunits p220 and p26, whereas isoform EIF(iso)4F has subunits p82 and p28. Post-translationally, according to the redox status, the Cys-113-Cys-152 disulfide bridge may have a role in regulating protein function by affecting its ability to bind capped mRNA.

Its function is as follows. Recognizes and binds the 7-methylguanosine-containing mRNA cap during an early step in the initiation of protein synthesis and facilitates ribosome binding by inducing the unwinding of the mRNAs secondary structures. This Zea mays (Maize) protein is Eukaryotic translation initiation factor isoform 4E-2.